The primary structure comprises 613 residues: Probable potassium transport system protein Kup 1 (613 aa).

Transmembrane regions (helical) follow at residues 40 to 60 (VLSM…VVFV), 93 to 113 (MLLG…TPAI), 127 to 147 (PALQ…LFLL), 158 to 178 (LFGP…LFSV), 201 to 221 (AVQA…AEAL), 237 to 257 (WFYI…ALLL), 266 to 286 (PFFL…ATAA), 288 to 308 (VIAS…AVHL), 327 to 347 (IYVP…VLAF), 356 to 376 (AYGI…TVVM), 384 to 404 (LPAV…FFGA), and 409 to 429 (VAAG…LMVT).

The protein belongs to the HAK/KUP transporter (TC 2.A.72) family.

It localises to the cell inner membrane. The enzyme catalyses K(+)(in) + H(+)(in) = K(+)(out) + H(+)(out). In terms of biological role, transport of potassium into the cell. Likely operates as a K(+):H(+) symporter. This is Probable potassium transport system protein Kup 1 from Ralstonia nicotianae (strain ATCC BAA-1114 / GMI1000) (Ralstonia solanacearum).